A 220-amino-acid polypeptide reads, in one-letter code: Adenylate kinase (220 aa).

12–17 (GAGKGT) provides a ligand contact to ATP. The segment at 32-62 (STGDIFRDIVKKENDELGKKIKEIMEKGELV) is NMP. Residues Thr-33, Arg-38, 60–62 (ELV), 88–91 (GYPR), and Gln-95 contribute to the AMP site. The interval 129–166 (SRRICPKCGRIYNMISLPPKEDELCDDCKVKLVQRDDD) is LID. Arg-130 contributes to the ATP binding site. The Zn(2+) site is built by Cys-133 and Cys-136. 139–140 (IY) contacts ATP. Residues Cys-153 and Cys-156 each coordinate Zn(2+). Residues Arg-163 and Arg-174 each contribute to the AMP site. Residue Ile-202 participates in ATP binding.

This sequence belongs to the adenylate kinase family. Monomer.

It is found in the cytoplasm. It catalyses the reaction AMP + ATP = 2 ADP. It functions in the pathway purine metabolism; AMP biosynthesis via salvage pathway; AMP from ADP: step 1/1. Functionally, catalyzes the reversible transfer of the terminal phosphate group between ATP and AMP. Plays an important role in cellular energy homeostasis and in adenine nucleotide metabolism. The chain is Adenylate kinase from Thermotoga neapolitana.